Reading from the N-terminus, the 471-residue chain is Isochorismate synthase MenF (471 aa).

Lys226 (proton acceptor) is an active-site residue. Glu275 functions as the Proton donor in the catalytic mechanism. The Mg(2+) site is built by Glu319 and Glu454.

This sequence belongs to the isochorismate synthase family. The cofactor is Mg(2+).

The catalysed reaction is chorismate = isochorismate. It functions in the pathway quinol/quinone metabolism; 1,4-dihydroxy-2-naphthoate biosynthesis; 1,4-dihydroxy-2-naphthoate from chorismate: step 1/7. Its pathway is quinol/quinone metabolism; menaquinone biosynthesis. In terms of biological role, catalyzes the conversion of chorismate to isochorismate. This chain is Isochorismate synthase MenF, found in Bacillus subtilis (strain 168).